We begin with the raw amino-acid sequence, 298 residues long: Probable GTP 3',8-cyclase (298 aa).

The Radical SAM core domain occupies 4–221; that stretch reads RYGREIRSFR…VFTRKFMQNR (218 aa). Residue Arg13 participates in GTP binding. Residues Cys20 and Cys24 each contribute to the [4Fe-4S] cluster site. S-adenosyl-L-methionine is bound at residue Tyr26. Position 27 (Cys27) interacts with [4Fe-4S] cluster. Residue Lys61 coordinates GTP. Gly65 contributes to the S-adenosyl-L-methionine binding site. Position 91 (Thr91) interacts with GTP. Ser115 contacts S-adenosyl-L-methionine. Lys152 is a binding site for GTP. [4Fe-4S] cluster is bound by residues Cys243 and Cys246. Residue 248-250 participates in GTP binding; the sequence is RIR. Cys260 contacts [4Fe-4S] cluster.

It belongs to the radical SAM superfamily. MoaA family. It depends on [4Fe-4S] cluster as a cofactor.

It carries out the reaction GTP + AH2 + S-adenosyl-L-methionine = (8S)-3',8-cyclo-7,8-dihydroguanosine 5'-triphosphate + 5'-deoxyadenosine + L-methionine + A + H(+). It functions in the pathway cofactor biosynthesis; molybdopterin biosynthesis. Functionally, catalyzes the cyclization of GTP to (8S)-3',8-cyclo-7,8-dihydroguanosine 5'-triphosphate. This chain is Probable GTP 3',8-cyclase, found in Methanococcus maripaludis (strain C7 / ATCC BAA-1331).